Here is a 193-residue protein sequence, read N- to C-terminus: Ion-translocating oxidoreductase complex subunit A (193 aa).

The next 6 membrane-spanning stretches (helical) occupy residues 5 to 25 (ALLF…FLGL), 39 to 59 (IGMG…SWLV), 62 to 82 (FILV…LVLA), 102 to 122 (LLGI…VVLL), 134 to 154 (TIYG…FAAI), and 171 to 191 (SIAL…TGLV).

This sequence belongs to the NqrDE/RnfAE family. In terms of assembly, the complex is composed of six subunits: RnfA, RnfB, RnfC, RnfD, RnfE and RnfG.

It localises to the cell inner membrane. Part of a membrane-bound complex that couples electron transfer with translocation of ions across the membrane. This is Ion-translocating oxidoreductase complex subunit A from Pectobacterium carotovorum subsp. carotovorum (strain PC1).